The following is a 417-amino-acid chain: Mitochondrial tRNA-specific 2-thiouridylase 1 (417 aa).

ATP is bound by residues A32 to S39 and M58. An interaction with target base in tRNA region spans residues N122–D124. The active-site Nucleophile is the C127. A disulfide bond links C127 and C229. G154 provides a ligand contact to ATP. Residues K179 to Q181 are interaction with tRNA. C229 serves as the catalytic Cysteine persulfide intermediate. Residues R354–S355 form an interaction with tRNA region.

Belongs to the MnmA/TRMU family.

It localises to the mitochondrion. The catalysed reaction is 5-taurinomethyluridine(34) in tRNA + S-sulfanyl-L-cysteinyl-[protein] + AH2 + ATP = 5-taurinomethyl-2-thiouridine(34) in tRNA + L-cysteinyl-[protein] + A + AMP + diphosphate + H(+). Catalyzes the 2-thiolation of uridine at the wobble position (U34) of mitochondrial tRNA(Lys), tRNA(Glu) and tRNA(Gln). Required for the formation of 5-taurinomethyl-2-thiouridine (tm5s2U) of mitochondrial tRNA(Lys), tRNA(Glu), and tRNA(Gln) at the wobble position. ATP is required to activate the C2 atom of the wobble base. The chain is Mitochondrial tRNA-specific 2-thiouridylase 1 (SLM3) from Saccharomyces cerevisiae (strain ATCC 204508 / S288c) (Baker's yeast).